Here is a 261-residue protein sequence, read N- to C-terminus: tRNA pseudouridine synthase A (261 aa).

Aspartate 52 acts as the Nucleophile in catalysis. Position 110 (tyrosine 110) interacts with substrate.

Belongs to the tRNA pseudouridine synthase TruA family. Homodimer.

The enzyme catalyses uridine(38/39/40) in tRNA = pseudouridine(38/39/40) in tRNA. Formation of pseudouridine at positions 38, 39 and 40 in the anticodon stem and loop of transfer RNAs. The sequence is that of tRNA pseudouridine synthase A from Coxiella burnetii (strain CbuK_Q154) (Coxiella burnetii (strain Q154)).